A 316-amino-acid polypeptide reads, in one-letter code: Methionyl-tRNA formyltransferase (316 aa).

S117–P120 lines the (6S)-5,6,7,8-tetrahydrofolate pocket.

The protein belongs to the Fmt family.

It carries out the reaction L-methionyl-tRNA(fMet) + (6R)-10-formyltetrahydrofolate = N-formyl-L-methionyl-tRNA(fMet) + (6S)-5,6,7,8-tetrahydrofolate + H(+). Functionally, attaches a formyl group to the free amino group of methionyl-tRNA(fMet). The formyl group appears to play a dual role in the initiator identity of N-formylmethionyl-tRNA by promoting its recognition by IF2 and preventing the misappropriation of this tRNA by the elongation apparatus. The sequence is that of Methionyl-tRNA formyltransferase from Janthinobacterium sp. (strain Marseille) (Minibacterium massiliensis).